Consider the following 241-residue polypeptide: Orotidine 5'-phosphate decarboxylase (241 aa).

Substrate-binding positions include D19, K41, 69–78 (DLKFFDIPAT), T124, R185, Q194, G214, and R215. The active-site Proton donor is K71.

The protein belongs to the OMP decarboxylase family. Type 1 subfamily. In terms of assembly, homodimer.

It catalyses the reaction orotidine 5'-phosphate + H(+) = UMP + CO2. It functions in the pathway pyrimidine metabolism; UMP biosynthesis via de novo pathway; UMP from orotate: step 2/2. In terms of biological role, catalyzes the decarboxylation of orotidine 5'-monophosphate (OMP) to uridine 5'-monophosphate (UMP). This Stenotrophomonas maltophilia (strain K279a) protein is Orotidine 5'-phosphate decarboxylase.